Here is a 101-residue protein sequence, read N- to C-terminus: Feather keratin Cos1-1/Cos1-3/Cos2-1 (101 aa).

An N-acetylserine modification is found at serine 2.

This sequence belongs to the avian keratin family. As to quaternary structure, the avian keratins (F-ker, S-ker, C-ker and B-ker) are a complex mixture of very similar polypeptides.

The protein is Feather keratin Cos1-1/Cos1-3/Cos2-1 of Columba livia (Rock dove).